The sequence spans 91 residues: Elongation factor 1-beta (91 aa).

It belongs to the EF-1-beta/EF-1-delta family.

In terms of biological role, promotes the exchange of GDP for GTP in EF-1-alpha/GDP, thus allowing the regeneration of EF-1-alpha/GTP that could then be used to form the ternary complex EF-1-alpha/GTP/AAtRNA. In Sulfurisphaera tokodaii (strain DSM 16993 / JCM 10545 / NBRC 100140 / 7) (Sulfolobus tokodaii), this protein is Elongation factor 1-beta.